Here is a 445-residue protein sequence, read N- to C-terminus: Argininosuccinate synthase (445 aa).

Residues 17–25 (AFSGGLDTS) and Ala43 contribute to the ATP site. Tyr99 provides a ligand contact to L-citrulline. Positions 129 and 131 each coordinate ATP. L-aspartate contacts are provided by Thr131, Asn135, and Asp136. Asn135 serves as a coordination point for L-citrulline. Asp136 lines the ATP pocket. The L-citrulline site is built by Arg139 and Ser192. Asp194 lines the ATP pocket. L-citrulline is bound by residues Thr201, Glu203, and Glu280.

The protein belongs to the argininosuccinate synthase family. Type 2 subfamily. In terms of assembly, homotetramer.

The protein resides in the cytoplasm. The catalysed reaction is L-citrulline + L-aspartate + ATP = 2-(N(omega)-L-arginino)succinate + AMP + diphosphate + H(+). The protein operates within amino-acid biosynthesis; L-arginine biosynthesis; L-arginine from L-ornithine and carbamoyl phosphate: step 2/3. The chain is Argininosuccinate synthase (argG) from Bradyrhizobium diazoefficiens (strain JCM 10833 / BCRC 13528 / IAM 13628 / NBRC 14792 / USDA 110).